We begin with the raw amino-acid sequence, 233 residues long: Octanoyltransferase (233 aa).

In terms of domain architecture, BPL/LPL catalytic spans 34–214 (GQAPSTVLLL…EFSAREATLI (181 aa)). Substrate-binding positions include 72-79 (RGGKLTWH), 144-146 (AIG), and 157-159 (GFS). The active-site Acyl-thioester intermediate is the C175.

It belongs to the LipB family.

Its subcellular location is the cytoplasm. The enzyme catalyses octanoyl-[ACP] + L-lysyl-[protein] = N(6)-octanoyl-L-lysyl-[protein] + holo-[ACP] + H(+). Its pathway is protein modification; protein lipoylation via endogenous pathway; protein N(6)-(lipoyl)lysine from octanoyl-[acyl-carrier-protein]: step 1/2. Functionally, catalyzes the transfer of endogenously produced octanoic acid from octanoyl-acyl-carrier-protein onto the lipoyl domains of lipoate-dependent enzymes. Lipoyl-ACP can also act as a substrate although octanoyl-ACP is likely to be the physiological substrate. This chain is Octanoyltransferase, found in Renibacterium salmoninarum (strain ATCC 33209 / DSM 20767 / JCM 11484 / NBRC 15589 / NCIMB 2235).